Reading from the N-terminus, the 293-residue chain is HTH-type transcriptional regulator ArgP (293 aa).

The HTH lysR-type domain occupies 4–60 (PDYRTLQALDAVIRERGFERAAQKLCITQSAVSQRIKQLENLFGQPLLVRTIPPHPT). The H-T-H motif DNA-binding region spans 21 to 40 (FERAAQKLCITQSAVSQRIK).

Belongs to the LysR transcriptional regulatory family. Homodimer.

Its function is as follows. Controls the transcription of genes involved in arginine and lysine metabolism. The sequence is that of HTH-type transcriptional regulator ArgP from Sodalis glossinidius (strain morsitans).